A 395-amino-acid chain; its full sequence is Small ribosomal subunit protein mS31 (395 aa).

A mitochondrion-targeting transit peptide spans 1 to 65 (MFPRVSTFLP…IQRYFGTNSV (65 aa)). Disordered regions lie at residues 70–97 (KDKQ…NTKK) and 175–196 (SELL…DAKR). The span at 183–196 (QHEEESRAQRDAKR) shows a compositional bias: basic and acidic residues.

The protein belongs to the mitochondrion-specific ribosomal protein mS31 family. As to quaternary structure, component of the mitochondrial small ribosomal subunit (mt-SSU). Mature mammalian 55S mitochondrial ribosomes consist of a small (28S) and a large (39S) subunit. The 28S small subunit contains a 12S ribosomal RNA (12S mt-rRNA) and 30 different proteins. The 39S large subunit contains a 16S rRNA (16S mt-rRNA), a copy of mitochondrial valine transfer RNA (mt-tRNA(Val)), which plays an integral structural role, and 52 different proteins.

The protein localises to the mitochondrion. The polypeptide is Small ribosomal subunit protein mS31 (MRPS31) (Homo sapiens (Human)).